Reading from the N-terminus, the 293-residue chain is MEITFQKVEHRYQYKTPFERRALYDVDVSFPSGGYYAIIGHTGSGKSTMIQHLNGLLQPTNGTVQIGEHFISAGKKEKKLKLLRKKVGVVFQFPEHQLFEETVEKDICFGPTNFGVSEEAAKQKAREAIELVGLEPDLLARSPFELSGGQMRRVAIAGVLAMEPEVLVLDEPTAGLDPKGQNELMEMFYKLHKEKGLTVILVTHNMEDAAKYAEQIIVMHKGTVFLQGSAEEVFSHADELEKIGVDLPMSLKYKRAIEEKFGISIPKATLSLEDLTHEVVQVLRKGGHESCSS.

The 244-residue stretch at 3–246 (ITFQKVEHRY…ADELEKIGVD (244 aa)) folds into the ABC transporter domain. Residue 40 to 47 (GHTGSGKS) coordinates ATP.

This sequence belongs to the ABC transporter superfamily. Energy-coupling factor EcfA family. As to quaternary structure, forms a stable energy-coupling factor (ECF) transporter complex composed of 2 membrane-embedded substrate-binding proteins (S component), 2 ATP-binding proteins (A component) and 2 transmembrane proteins (T component).

It is found in the cell membrane. Its function is as follows. ATP-binding (A) component of a common energy-coupling factor (ECF) ABC-transporter complex. Unlike classic ABC transporters this ECF transporter provides the energy necessary to transport a number of different substrates. The polypeptide is Energy-coupling factor transporter ATP-binding protein EcfA2 (Bacillus cereus (strain ZK / E33L)).